Reading from the N-terminus, the 272-residue chain is Probable proteasome subunit beta type-5 (272 aa).

A propeptide spans 1-61 (MNSIVSKYTQ…KHCLIKMNHG (61 aa)) (removed in mature form). Threonine 62 (nucleophile) is an active-site residue.

Belongs to the peptidase T1B family. In terms of assembly, the 26S proteasome consists of a 20S proteasome core and two 19S regulatory subunits. The 20S proteasome core is composed of 28 subunits that are arranged in four stacked rings, resulting in a barrel-shaped structure. The two end rings are each formed by seven alpha subunits, and the two central rings are each formed by seven beta subunits. The catalytic chamber with the active sites is on the inside of the barrel.

The protein localises to the cytoplasm. It is found in the nucleus. The catalysed reaction is Cleavage of peptide bonds with very broad specificity.. The proteasome is a multicatalytic proteinase complex which is characterized by its ability to cleave peptides with Arg, Phe, Tyr, Leu, and Glu adjacent to the leaving group at neutral or slightly basic pH. The proteasome has an ATP-dependent proteolytic activity. In Schizosaccharomyces pombe (strain 972 / ATCC 24843) (Fission yeast), this protein is Probable proteasome subunit beta type-5 (pts1).